We begin with the raw amino-acid sequence, 356 residues long: NADH-quinone oxidoreductase subunit H (356 aa).

8 helical membrane passes run 18–38 (IVMV…IAYI), 87–107 (GVFL…WAVI), 120–140 (VGIL…IMAG), 166–186 (IGFV…SAIV), 202–222 (WLTF…VFYV), 265–285 (AITT…LPPI), 292–312 (WVPG…LFAM), and 328–348 (LGWK…AGVL).

This sequence belongs to the complex I subunit 1 family. NDH-1 is composed of 14 different subunits. Subunits NuoA, H, J, K, L, M, N constitute the membrane sector of the complex.

The protein resides in the cell inner membrane. The enzyme catalyses a quinone + NADH + 5 H(+)(in) = a quinol + NAD(+) + 4 H(+)(out). NDH-1 shuttles electrons from NADH, via FMN and iron-sulfur (Fe-S) centers, to quinones in the respiratory chain. The immediate electron acceptor for the enzyme in this species is believed to be ubiquinone. Couples the redox reaction to proton translocation (for every two electrons transferred, four hydrogen ions are translocated across the cytoplasmic membrane), and thus conserves the redox energy in a proton gradient. This subunit may bind ubiquinone. The chain is NADH-quinone oxidoreductase subunit H from Nitrobacter hamburgensis (strain DSM 10229 / NCIMB 13809 / X14).